Reading from the N-terminus, the 235-residue chain is Carbohydrate deacetylase (235 aa).

Mg(2+)-binding residues include H61 and H124.

This sequence belongs to the YdjC deacetylase family. Mg(2+) is required as a cofactor.

Functionally, probably catalyzes the deacetylation of acetylated carbohydrates an important step in the degradation of oligosaccharides. This is Carbohydrate deacetylase from Bacillus cereus (strain B4264).